We begin with the raw amino-acid sequence, 233 residues long: Putative 26S proteasome non-ATPase regulatory subunit 8 homolog B (233 aa).

Met-1 carries the N-acetylmethionine modification. In terms of domain architecture, PCI spans 38–217 (DHYLISLSLN…APCKEIPSLQ (180 aa)).

Belongs to the proteasome subunit S14 family. Component of the 19S regulatory particle (RP/PA700) lid subcomplex of the 26S proteasome. The 26S proteasome is composed of a core protease (CP), known as the 20S proteasome, capped at one or both ends by the 19S regulatory particle (RP/PA700). The RP/PA700 complex is composed of at least 17 different subunits in two subcomplexes, the base and the lid, which form the portions proximal and distal to the 20S proteolytic core, respectively. Interacts with UCH1 and UCH2.

Its function is as follows. Acts as a regulatory subunit of the 26S proteasome which is involved in the ATP-dependent degradation of ubiquitinated proteins. The protein is Putative 26S proteasome non-ATPase regulatory subunit 8 homolog B of Arabidopsis thaliana (Mouse-ear cress).